We begin with the raw amino-acid sequence, 248 residues long: Non-specific acid phosphatase (248 aa).

Residues 1–20 (MKKLLAVFCAGAFVSTSVFA) form the signal peptide.

It belongs to the class A bacterial acid phosphatase family.

The protein resides in the periplasm. It catalyses the reaction a phosphate monoester + H2O = an alcohol + phosphate. The protein is Non-specific acid phosphatase (phoN) of Providencia stuartii.